Here is a 180-residue protein sequence, read N- to C-terminus: Large ribosomal subunit protein uL5 (180 aa).

This sequence belongs to the universal ribosomal protein uL5 family. Forms a bridge to the 30S subunit in the 70S ribosome. Part of the 50S ribosomal subunit; part of the 5S rRNA/L5/L18/L25 (CTC) subcomplex. Is known to contact the 5S rRNA, 23S rRNA and the P site tRNA.

In terms of biological role, this is one of the proteins that bind and probably mediate the attachment of the 5S RNA into the large ribosomal subunit, where it forms part of the central protuberance. In the 70S ribosome it contacts protein S13 of the 30S subunit (bridge B1b), connecting the 2 subunits; this bridge is implicated in subunit movement. Contacts the P site tRNA; the 5S rRNA and some of its associated proteins might help stabilize positioning of ribosome-bound tRNAs. This is Large ribosomal subunit protein uL5 (rplE) from Deinococcus radiodurans (strain ATCC 13939 / DSM 20539 / JCM 16871 / CCUG 27074 / LMG 4051 / NBRC 15346 / NCIMB 9279 / VKM B-1422 / R1).